Here is a 209-residue protein sequence, read N- to C-terminus: Peroxynitrite isomerase 2 (209 aa).

The short motif at 56 to 62 (GVWRGEG) is the GXWXGXG element. 2 residues coordinate heme b: lysine 172 and histidine 199.

Belongs to the nitrobindin family. Homodimer. Heme b is required as a cofactor.

The catalysed reaction is peroxynitrite = nitrate. Its pathway is nitrogen metabolism. Functionally, heme-binding protein able to scavenge peroxynitrite and to protect free L-tyrosine against peroxynitrite-mediated nitration, by acting as a peroxynitrite isomerase that converts peroxynitrite to nitrate. Therefore, this protein likely plays a role in peroxynitrite sensing and in the detoxification of reactive nitrogen and oxygen species (RNS and ROS, respectively). Is able to bind nitric oxide (NO) in vitro, but may act as a sensor of peroxynitrite levels in vivo. In Mycolicibacterium vanbaalenii (strain DSM 7251 / JCM 13017 / BCRC 16820 / KCTC 9966 / NRRL B-24157 / PYR-1) (Mycobacterium vanbaalenii), this protein is Peroxynitrite isomerase 2.